A 145-amino-acid polypeptide reads, in one-letter code: D-aminoacyl-tRNA deacylase (145 aa).

Positions 137 to 138 match the Gly-cisPro motif, important for rejection of L-amino acids motif; it reads GP.

Belongs to the DTD family. Homodimer.

It localises to the cytoplasm. The enzyme catalyses glycyl-tRNA(Ala) + H2O = tRNA(Ala) + glycine + H(+). It catalyses the reaction a D-aminoacyl-tRNA + H2O = a tRNA + a D-alpha-amino acid + H(+). An aminoacyl-tRNA editing enzyme that deacylates mischarged D-aminoacyl-tRNAs. Also deacylates mischarged glycyl-tRNA(Ala), protecting cells against glycine mischarging by AlaRS. Acts via tRNA-based rather than protein-based catalysis; rejects L-amino acids rather than detecting D-amino acids in the active site. By recycling D-aminoacyl-tRNA to D-amino acids and free tRNA molecules, this enzyme counteracts the toxicity associated with the formation of D-aminoacyl-tRNA entities in vivo and helps enforce protein L-homochirality. This is D-aminoacyl-tRNA deacylase from Shewanella baltica (strain OS155 / ATCC BAA-1091).